The chain runs to 523 residues: Tyrosine-protein kinase transforming protein Src (523 aa).

A disordered region spans residues 1 to 50 (MGSSKSKPKDPSQRRRSLEPPDSTHHGGFPASQTPNKTAAPDTHRTPSRS). The N-myristoyl glycine; by host moiety is linked to residue Gly2. Basic and acidic residues predominate over residues 7–25 (KPKDPSQRRRSLEPPDSTH). One can recognise an SH3 domain in the interval 71-139 (TSPQRAGALA…PSNYVAPSDS (69 aa)). The SH2 domain occupies 145-242 (WYFGKITRRE…GLCHRLTNVC (98 aa)). A Protein kinase domain is found at 264 to 514 (LRLEVKLGQG…TFEYLQAQLL (251 aa)). ATP is bound by residues 270–278 (LGQGYFGEV) and Lys292. Asp383 acts as the Proton acceptor in catalysis. Tyr413 bears the Phosphotyrosine; by autocatalysis mark.

Belongs to the protein kinase superfamily. Tyr protein kinase family. SRC subfamily. In terms of assembly, homodimer. In terms of processing, the phosphorylated form is termed pp60v-src.

It carries out the reaction L-tyrosyl-[protein] + ATP = O-phospho-L-tyrosyl-[protein] + ADP + H(+). Functionally, this phosphoprotein, required for both the initiation and the maintenance of neoplastic transformation, is a protein kinase that catalyzes the phosphorylation of tyrosine residues in vitro. The sequence is that of Tyrosine-protein kinase transforming protein Src (V-SRC) from Gallus gallus (Chicken).